A 147-amino-acid polypeptide reads, in one-letter code: 3-dehydroquinate dehydratase (147 aa).

Tyr22 acts as the Proton acceptor in catalysis. Residues Asn76, His82, and Asp89 each contribute to the substrate site. His102 acts as the Proton donor in catalysis. Substrate contacts are provided by residues 103–104 (IS) and Arg113.

It belongs to the type-II 3-dehydroquinase family. Homododecamer.

The catalysed reaction is 3-dehydroquinate = 3-dehydroshikimate + H2O. The protein operates within metabolic intermediate biosynthesis; chorismate biosynthesis; chorismate from D-erythrose 4-phosphate and phosphoenolpyruvate: step 3/7. Its function is as follows. Catalyzes a trans-dehydration via an enolate intermediate. This is 3-dehydroquinate dehydratase from Fusobacterium nucleatum subsp. nucleatum (strain ATCC 25586 / DSM 15643 / BCRC 10681 / CIP 101130 / JCM 8532 / KCTC 2640 / LMG 13131 / VPI 4355).